A 627-amino-acid chain; its full sequence is BURP domain-containing protein 12 (627 aa).

The first 25 residues, 1–25 (MASPPHLPLLLLLLVVVCNAAGGDG), serve as a signal peptide directing secretion. N119, N175, N251, N366, N384, and N530 each carry an N-linked (GlcNAc...) asparagine glycan. One can recognise a BURP domain in the interval 415–626 (FFRETELVSG…FEGDMTWTVA (212 aa)).

In terms of tissue distribution, expressed in stems, leaves, shoot and panicles.

This chain is BURP domain-containing protein 12 (BURP12), found in Oryza sativa subsp. japonica (Rice).